The sequence spans 893 residues: Exocyst complex component 4 (893 aa).

Residues Met-1 to Ser-27 form a disordered region.

The protein belongs to the SEC8 family. In terms of assembly, the exocyst complex is composed of sec-3/exoc1, sec-5/exoc2, sec-6/exoc3, sec-8/exoc4, sec-10/exoc5, sec-15/exoc6, exo-70/exoc7 and exo-84/exoc8. Pseudocoelom.

In terms of biological role, component of the exocyst complex involved in the docking of exocytic vesicles with fusion sites on the plasma membrane. The protein is Exocyst complex component 4 (sec-8) of Caenorhabditis elegans.